The primary structure comprises 159 residues: Small ribosomal subunit protein uS7c (159 aa).

The disordered stretch occupies residues 137 to 159 (HAIRKKEETHKMAESNRAXAHYR). Basic and acidic residues predominate over residues 141–150 (KKEETHKMAE).

This sequence belongs to the universal ribosomal protein uS7 family. Part of the 30S ribosomal subunit.

The protein resides in the plastid. The protein localises to the chloroplast. Its function is as follows. One of the primary rRNA binding proteins, it binds directly to 16S rRNA where it nucleates assembly of the head domain of the 30S subunit. The chain is Small ribosomal subunit protein uS7c (rps7) from Sciadopitys verticillata (Japanese umbrella-pine).